The sequence spans 109 residues: Hainantoxin-XVIII-2 (109 aa).

A signal peptide spans 1–18 (MKLSIIIIATSLVIAVVA). Residues 19 to 46 (FPSKDSKAIENDKTEQRMEIVVQETARA) constitute a propeptide that is removed on maturation. Cystine bridges form between C47–C62, C59–C108, and C61–C81.

It belongs to the neurotoxin 25 family. F7 subfamily. In terms of tissue distribution, expressed by the venom gland.

It is found in the secreted. Its function is as follows. Putative ion channel inhibitor. The protein is Hainantoxin-XVIII-2 of Cyriopagopus hainanus (Chinese bird spider).